The primary structure comprises 72 residues: Translation initiation factor IF-1 (72 aa).

The S1-like domain maps to 1–72 (MSKQTAIEQD…TKGRISFRYK (72 aa)).

This sequence belongs to the IF-1 family. As to quaternary structure, component of the 30S ribosomal translation pre-initiation complex which assembles on the 30S ribosome in the order IF-2 and IF-3, IF-1 and N-formylmethionyl-tRNA(fMet); mRNA recruitment can occur at any time during PIC assembly.

Its subcellular location is the cytoplasm. One of the essential components for the initiation of protein synthesis. Stabilizes the binding of IF-2 and IF-3 on the 30S subunit to which N-formylmethionyl-tRNA(fMet) subsequently binds. Helps modulate mRNA selection, yielding the 30S pre-initiation complex (PIC). Upon addition of the 50S ribosomal subunit IF-1, IF-2 and IF-3 are released leaving the mature 70S translation initiation complex. This Porphyromonas gingivalis (strain ATCC BAA-308 / W83) protein is Translation initiation factor IF-1.